A 713-amino-acid polypeptide reads, in one-letter code: Protein tyrosine phosphatase domain-containing protein 1 (713 aa).

The Tyrosine-protein phosphatase domain maps to tyrosine 80–cysteine 251. The active-site Phosphocysteine intermediate is the cysteine 188.

This sequence belongs to the protein-tyrosine phosphatase family. Non-receptor class PTPDC1 subfamily.

Its function is as follows. May play roles in cilia formation and/or maintenance. The chain is Protein tyrosine phosphatase domain-containing protein 1 (ptpdc1) from Danio rerio (Zebrafish).